A 201-amino-acid chain; its full sequence is UPF0301 protein Arad_1256 (201 aa).

The protein belongs to the UPF0301 (AlgH) family.

The polypeptide is UPF0301 protein Arad_1256 (Rhizobium rhizogenes (strain K84 / ATCC BAA-868) (Agrobacterium radiobacter)).